A 151-amino-acid polypeptide reads, in one-letter code: Protein SprT-like (151 aa).

One can recognise a SprT-like domain in the interval 6–147; it reads LQRMVENLSE…GHCNGKLRMK (142 aa). H67 serves as a coordination point for Zn(2+). The active site involves E68. H71 lines the Zn(2+) pocket.

Belongs to the SprT family. It depends on Zn(2+) as a cofactor.

It is found in the cytoplasm. The sequence is that of Protein SprT-like from Staphylococcus aureus (strain MRSA252).